The primary structure comprises 351 residues: Porphobilinogen deaminase (351 aa).

Position 242 is an S-(dipyrrolylmethanemethyl)cysteine (Cys242). In terms of domain architecture, RPE1 insert spans 257 to 306 (PRHLSKLAYREVLEGNTEALATAAYKSNRTDASTGLTYKLPLEVEFGKVS).

It belongs to the HMBS family. Monomer. Dipyrromethane serves as cofactor.

It carries out the reaction 4 porphobilinogen + H2O = hydroxymethylbilane + 4 NH4(+). It participates in porphyrin-containing compound metabolism; protoporphyrin-IX biosynthesis; coproporphyrinogen-III from 5-aminolevulinate: step 2/4. Tetrapolymerization of the monopyrrole PBG into the hydroxymethylbilane pre-uroporphyrinogen in several discrete steps. The polypeptide is Porphobilinogen deaminase (Rickettsia conorii (strain ATCC VR-613 / Malish 7)).